The primary structure comprises 592 residues: A-type ATP synthase subunit A (592 aa).

Residue 234–241 participates in ATP binding; it reads GPFGSGKT.

The protein belongs to the ATPase alpha/beta chains family. As to quaternary structure, has multiple subunits with at least A(3), B(3), C, D, E, F, H, I and proteolipid K(x).

It localises to the cell membrane. It carries out the reaction ATP + H2O + 4 H(+)(in) = ADP + phosphate + 5 H(+)(out). Functionally, produces ATP from ADP in the presence of a proton gradient across the membrane. The archaeal alpha chain is a catalytic subunit. In terms of biological role, component of the A-type ATP synthase that produces ATP from ADP in the presence of a proton gradient across the membrane. The A chain is the catalytic subunit. This chain is A-type ATP synthase subunit A, found in Sulfolobus acidocaldarius (strain ATCC 33909 / DSM 639 / JCM 8929 / NBRC 15157 / NCIMB 11770).